The chain runs to 1709 residues: Protein SHORTAGE IN CHIASMATA 1 homolog (1709 aa).

3 stretches are compositionally biased toward basic and acidic residues: residues proline 532–aspartate 542, aspartate 552–threonine 568, and glutamate 1601–serine 1613. Disordered stretches follow at residues proline 532–proline 586 and lysine 1566–tryptophan 1662.

Belongs to the XPF family. As to quaternary structure, interacts (via C-terminus) with PTD. Interacts with ZIP4. In terms of tissue distribution, highly expressed in anthers and pistil during meiosis. Expressed in pollen mother cells (PMCs) during meiosis. Expressed at low levels in roots, shoots, leaves, flowers, and glumes.

Its subcellular location is the chromosome. The protein resides in the nucleus. It is found in the cytoplasm. It localises to the cell membrane. In terms of biological role, essential for normal crossover (CO) formation during meiosis. Essential component for the formation of class I meiotic COs. Interacts with PTD, another meiotic component, to regulate CO formation, possibly by stabilizing the recombination intermediates during meiosis. SHOC1 and PTD may form transient heterotrimeric or heterotetrameric complexes with HEI10 and/or ZIP4 to promote class I COs formation. Does not seem to be involved in early meiotic recombination steps involving double-strand break (DSB) formation, processing, and single-strand invasion. Does not seem to be involved in homologous pairing or synaptonemal complex (SC) assembly. This chain is Protein SHORTAGE IN CHIASMATA 1 homolog, found in Oryza sativa subsp. japonica (Rice).